A 456-amino-acid chain; its full sequence is Alcohol acyltransferase 17 (456 aa).

Residues His-166 and Asp-382 each act as proton acceptor in the active site.

The protein belongs to the plant acyltransferase family. In terms of tissue distribution, expressed in fruit.

Its function is as follows. Involved in the biosynthesis of volatile esters which confer kiwifruit flavor. Alcohol acyl transferase that can use a wide range of alcohols as substrate to produce esters. In Actinidia deliciosa (Kiwi), this protein is Alcohol acyltransferase 17.